The chain runs to 344 residues: uncharacterized protein (344 aa).

The next 6 helical transmembrane spans lie at 155–175 (IARITLAPLGMIFLVYSIFLV), 181–201 (WGLGGIIFFLGVYFMVKAYGW), 221–241 (LSFIFYVTSAILLIISIVNGF), 254–274 (ISSFIFYSTWWFVLSGIFALL), 291–311 (FTIIFLLIAFGLIVWASAAYV), and 319–339 (ALQNLAGAIVGAILIAAIGVF).

To M.jannaschii MJ1032.

The protein resides in the cell membrane. This is an uncharacterized protein from Archaeoglobus fulgidus (strain ATCC 49558 / DSM 4304 / JCM 9628 / NBRC 100126 / VC-16).